We begin with the raw amino-acid sequence, 182 residues long: MNRCNIRLRLAGMTTWVASIALLAAALSGCGAGQISQTANQKPAVNGNRLTINNVLLRDIRIQAVQTSDFIQPGKAVDLVLVAVNQSPDVSDRLVGITSDIGSVTVAGDARLPASGMLFVGTPDGQIVAPGPLPSNQAAKATVNLTKPIANGLTYNFTFKFEKAGQGSVMVPISAGLATPHE.

Residues 1-29 form the signal peptide; sequence MNRCNIRLRLAGMTTWVASIALLAAALSG. C30 carries the N-palmitoyl cysteine lipid modification. C30 is lipidated: S-diacylglycerol cysteine.

It is found in the cell membrane. This Mycobacterium bovis (strain ATCC BAA-935 / AF2122/97) protein is Putative lipoprotein LpqE (lpqE).